Here is a 400-residue protein sequence, read N- to C-terminus: Enoyl-[acyl-carrier-protein] reductase [NADH] (400 aa).

Residues 48–53, 74–75, 111–112, and 139–140 contribute to the NAD(+) site; these read GSSSGY, FE, DA, and LA. Tyr-225 lines the substrate pocket. The active-site Proton donor is Tyr-235. Residues Lys-244 and 273-275 contribute to the NAD(+) site; that span reads VVT.

This sequence belongs to the TER reductase family. As to quaternary structure, monomer.

The catalysed reaction is a 2,3-saturated acyl-[ACP] + NAD(+) = a (2E)-enoyl-[ACP] + NADH + H(+). It functions in the pathway lipid metabolism; fatty acid biosynthesis. In terms of biological role, involved in the final reduction of the elongation cycle of fatty acid synthesis (FAS II). Catalyzes the reduction of a carbon-carbon double bond in an enoyl moiety that is covalently linked to an acyl carrier protein (ACP). The protein is Enoyl-[acyl-carrier-protein] reductase [NADH] of Shewanella pealeana (strain ATCC 700345 / ANG-SQ1).